The primary structure comprises 225 residues: Ribose-5-phosphate isomerase A (225 aa).

Substrate contacts are provided by residues 33–36 (TGST), 84–87 (DGAD), and 96–99 (KGGG). Catalysis depends on E105, which acts as the Proton acceptor. A substrate-binding site is contributed by K123.

The protein belongs to the ribose 5-phosphate isomerase family. As to quaternary structure, homodimer.

It catalyses the reaction aldehydo-D-ribose 5-phosphate = D-ribulose 5-phosphate. It functions in the pathway carbohydrate degradation; pentose phosphate pathway; D-ribose 5-phosphate from D-ribulose 5-phosphate (non-oxidative stage): step 1/1. In terms of biological role, catalyzes the reversible conversion of ribose-5-phosphate to ribulose 5-phosphate. The chain is Ribose-5-phosphate isomerase A from Halobacterium salinarum (strain ATCC 29341 / DSM 671 / R1).